Reading from the N-terminus, the 349-residue chain is Heat-inducible transcription repressor HrcA (349 aa).

Belongs to the HrcA family.

Its function is as follows. Negative regulator of class I heat shock genes (grpE-dnaK-dnaJ and groELS operons). Prevents heat-shock induction of these operons. The protein is Heat-inducible transcription repressor HrcA of Lactobacillus acidophilus (strain ATCC 700396 / NCK56 / N2 / NCFM).